Consider the following 296-residue polypeptide: Enoyl-CoA hydratase AFT3-1 (296 aa).

Residues 294–296 (PKL) carry the Peroxisomal targeting signal type 1 motif.

It belongs to the enoyl-CoA hydratase/isomerase family.

It localises to the peroxisome. The catalysed reaction is a (3S)-3-hydroxyacyl-CoA = a (2E)-enoyl-CoA + H2O. It carries out the reaction a 4-saturated-(3S)-3-hydroxyacyl-CoA = a (3E)-enoyl-CoA + H2O. It functions in the pathway mycotoxin biosynthesis. Functionally, enoyl-CoA hydratase; part of the gene clusters that mediate the biosynthesis of the host-selective toxins (HSTs) AF-toxins responsible for Alternaria black spot of strawberry disease by the strawberry pathotype. AF-toxin I and III are valine derivatives of 2,3-dyhydroxy-isovaleric acid and 2-hydroxy-isovaleric acid respectively, while AF II is an isoleucine derivative of 2-hydroxy-valeric acid. These derivatives are bound to a 9,10-epoxy-8-hydroxy-9-methyl-decatrienoic acid (EDA) moiety. On cellular level, AF-toxins affect plasma membrane of susceptible cells and cause a sudden increase in loss of K(+) after a few minutes of toxin treatment. The aldo-keto reductase AFTS1 catalyzes the conversion of 2-keto-isovaleric acid (2-KIV) to 2-hydroxy-isovaleric acid (2-HIV) by reduction of its ketone to an alcohol. The acyl-CoA ligase AFT1, the hydrolase AFT2 and the enoyl-CoA hydratases AFT3 and AFT6, but also the polyketide synthase AFT9, the acyl-CoA dehydrogenase AFT10, the cytochrome P450 monooxygenase AFT11 and the oxidoreductase AFT12 are all involved in the biosynthesis of the AK-, AF- and ACT-toxin common EDA structural moiety. The exact function of each enzyme, and of additional enzymes identified within the AF-toxin clusters have still to be determined. In Alternaria alternata (Alternaria rot fungus), this protein is Enoyl-CoA hydratase AFT3-1 (AFT3-1).